A 260-amino-acid chain; its full sequence is Methyl-coenzyme M reductase I subunit gamma (260 aa).

Residue Arg-123 participates in coenzyme M binding.

The protein belongs to the methyl-coenzyme M reductase gamma subunit family. As to quaternary structure, MCR is a hexamer of two alpha, two beta, and two gamma chains, forming a dimer of heterotrimers. Coenzyme F430 serves as cofactor.

It localises to the cytoplasm. The catalysed reaction is coenzyme B + methyl-coenzyme M = methane + coenzyme M-coenzyme B heterodisulfide. The protein operates within one-carbon metabolism; methyl-coenzyme M reduction; methane from methyl-coenzyme M: step 1/1. Functionally, component of the methyl-coenzyme M reductase (MCR) I that catalyzes the reductive cleavage of methyl-coenzyme M (CoM-S-CH3 or 2-(methylthio)ethanesulfonate) using coenzyme B (CoB or 7-mercaptoheptanoylthreonine phosphate) as reductant which results in the production of methane and the mixed heterodisulfide of CoB and CoM (CoM-S-S-CoB). This is the final step in methanogenesis. The polypeptide is Methyl-coenzyme M reductase I subunit gamma (mcrG) (Methanocaldococcus jannaschii (strain ATCC 43067 / DSM 2661 / JAL-1 / JCM 10045 / NBRC 100440) (Methanococcus jannaschii)).